The primary structure comprises 78 residues: D-alanyl carrier protein (78 aa).

Residues 1 to 78 (MDFNQEVLSV…QIIKQLNELR (78 aa)) form the Carrier domain. Serine 36 carries the O-(pantetheine 4'-phosphoryl)serine modification.

It belongs to the DltC family. In terms of processing, 4'-phosphopantetheine is transferred from CoA to a specific serine of apo-DCP.

The protein resides in the cytoplasm. It functions in the pathway cell wall biogenesis; lipoteichoic acid biosynthesis. Carrier protein involved in the D-alanylation of lipoteichoic acid (LTA). The loading of thioester-linked D-alanine onto DltC is catalyzed by D-alanine--D-alanyl carrier protein ligase DltA. The DltC-carried D-alanyl group is further transferred to cell membrane phosphatidylglycerol (PG) by forming an ester bond, probably catalyzed by DltD. D-alanylation of LTA plays an important role in modulating the properties of the cell wall in Gram-positive bacteria, influencing the net charge of the cell wall. The chain is D-alanyl carrier protein from Bacillus licheniformis (strain ATCC 14580 / DSM 13 / JCM 2505 / CCUG 7422 / NBRC 12200 / NCIMB 9375 / NCTC 10341 / NRRL NRS-1264 / Gibson 46).